The chain runs to 564 residues: Septation ring formation regulator EzrA (564 aa).

The Extracellular portion of the chain corresponds to 1 to 2; it reads MV. A helical membrane pass occupies residues 3–21; it reads FVISVILAIIVILTIGLIL. At 22–564 the chain is on the cytoplasmic side; that stretch reads RKRIYDKVDH…IEENQLTLNR (543 aa). 4 coiled-coil regions span residues 101 to 140, 168 to 215, 251 to 436, and 468 to 537; these read ANNI…REEV, FDKK…MEQF, GFDK…KKSN, and DIAK…ELSL.

This sequence belongs to the EzrA family.

Its subcellular location is the cell membrane. In terms of biological role, negative regulator of FtsZ ring formation; modulates the frequency and position of FtsZ ring formation. Inhibits FtsZ ring formation at polar sites. Interacts either with FtsZ or with one of its binding partners to promote depolymerization. In Oceanobacillus iheyensis (strain DSM 14371 / CIP 107618 / JCM 11309 / KCTC 3954 / HTE831), this protein is Septation ring formation regulator EzrA.